The sequence spans 193 residues: CD70 antigen (193 aa).

Residues 1 to 17 (MPEEGSGCSVRRRPYGC) are Cytoplasmic-facing. The helical; Signal-anchor for type II membrane protein transmembrane segment at 18 to 38 (VLRAALVPLVAGLVICLVVCI) threads the bilayer. At 39 to 193 (QRFAQAQQQL…TFFGVQWVRP (155 aa)) the chain is on the extracellular side. The THD domain occupies 56–191 (DVAELQLNHT…DETFFGVQWV (136 aa)). N-linked (GlcNAc...) asparagine glycosylation is present at N63. 2 disulfides stabilise this stretch: C115/C151 and C133/C168. Residue N170 is glycosylated (N-linked (GlcNAc...) asparagine).

The protein belongs to the tumor necrosis factor family. In terms of assembly, homotrimer. Post-translationally, N-glycosylated.

The protein localises to the cell membrane. In terms of biological role, expressed at the plasma membrane of B cells, it is the ligand of the CD27 receptor which is specifically expressed at the surface of T cells. The CD70-CD27 signaling pathway mediates antigen-specific T cell activation and expansion which in turn provides immune surveillance of B cells. The polypeptide is CD70 antigen (Homo sapiens (Human)).